Consider the following 282-residue polypeptide: Ammonia transport outward protein 2 (282 aa).

Residues Met1–Ser34 form a disordered region. Residue Ser2 is modified to N-acetylserine. Phosphoserine is present on residues Ser2, Ser7, Ser21, Ser22, Ser28, and Ser40. Over Ser2–Phe86 the chain is Extracellular. The helical transmembrane segment at Ala87–Phe107 threads the bilayer. At Asn108 to Val119 the chain is on the cytoplasmic side. A helical transmembrane segment spans residues Val120 to Ile140. At Ala141–Ala150 the chain is on the extracellular side. A helical transmembrane segment spans residues Leu151–Ile171. Residues Leu172 to Asn184 lie on the Cytoplasmic side of the membrane. The chain crosses the membrane as a helical span at residues Ala185 to Met205. Residues Lys206–Ser207 are Extracellular-facing. A helical membrane pass occupies residues Thr208–Ala228. Topologically, residues Asn229–Arg238 are cytoplasmic. The helical transmembrane segment at Ala239–Ile259 threads the bilayer. Topologically, residues Ala260–Phe282 are extracellular.

Belongs to the acetate uptake transporter (AceTr) (TC 2.A.96) family.

It localises to the cell membrane. In terms of biological role, transporter protein required for ammonia export. Involved in acetate resistance. In Saccharomyces cerevisiae (strain ATCC 204508 / S288c) (Baker's yeast), this protein is Ammonia transport outward protein 2 (ATO2).